A 380-amino-acid chain; its full sequence is Reducing-end xylose-releasing exo-oligoxylanase Rex8A (380 aa).

The Proton donor role is filled by Glu-70. Asp-265 serves as the catalytic Proton acceptor.

Belongs to the glycosyl hydrolase 8 (cellulase D) family.

It carries out the reaction Hydrolysis of (1-&gt;4)-beta-D-xylose residues from the reducing end of oligosaccharides.. It participates in glycan degradation; xylan degradation. Involved in depolymerization of xylan, a major component of the lignocellulosic substrates. Acts as an exo-oligoxylanase that efficiently hydrolyzes xylooligosaccharides, releasing xylose from their reducing ends. Hydrolyzes xylooligomers of 3 to 6 xylose units to xylose and xylobiose. Besides linear xylooligosaccharides, also hydrolyzes branched xylooligomers, such as xylooligomers decorated with 4-O-methyl-D-glucuronic acid moieties. Its proposed role is the degradation of xylooligomers produced by the activity of extracellular xylanases once they have been transported inside cells. Shows minor activity on polymeric xylan (glucuronoxylan from beechwood). Is not active on cellooligosaccharides or cellulosic substrates, or on other polysaccharides such as pectin, polygalacturonic acid, laminarin, or lichenan. This chain is Reducing-end xylose-releasing exo-oligoxylanase Rex8A, found in Paenibacillus barcinonensis.